A 97-amino-acid polypeptide reads, in one-letter code: Co-chaperonin GroES (97 aa).

It belongs to the GroES chaperonin family. Heptamer of 7 subunits arranged in a ring. Interacts with the chaperonin GroEL.

The protein localises to the cytoplasm. In terms of biological role, together with the chaperonin GroEL, plays an essential role in assisting protein folding. The GroEL-GroES system forms a nano-cage that allows encapsulation of the non-native substrate proteins and provides a physical environment optimized to promote and accelerate protein folding. GroES binds to the apical surface of the GroEL ring, thereby capping the opening of the GroEL channel. The protein is Co-chaperonin GroES of Pectobacterium carotovorum subsp. carotovorum (strain PC1).